We begin with the raw amino-acid sequence, 182 residues long: Transmembrane protein 11 homolog, mitochondrial (182 aa).

Ser25 carries the phosphoserine modification. Transmembrane regions (helical) follow at residues 70 to 89 and 91 to 108; these read TAVATGVVSLVASLLWRDRP and IAAPACALSIFCTGLYTV.

This sequence belongs to the TMEM11 family.

Its subcellular location is the mitochondrion inner membrane. Its function is as follows. Plays a role in mitochondrial morphogenesis. This Drosophila melanogaster (Fruit fly) protein is Transmembrane protein 11 homolog, mitochondrial (Pmi).